Reading from the N-terminus, the 49-residue chain is U1-theraphotoxin-Lp1b (49 aa).

Cystine bridges form between Cys4–Cys17, Cys8–Cys41, Cys22–Cys24, and Cys35–Cys46.

As to expression, expressed by the venom gland.

Its subcellular location is the secreted. Its function is as follows. Toxin that causes irreversible contractile paralysis into adult Aedes aegypti resulting in 100% mortality after 24 hours. This is U1-theraphotoxin-Lp1b from Lasiodora parahybana (Brazilian salmon pink birdeater).